The following is a 486-amino-acid chain: UDP-N-acetylmuramoyl-L-alanyl-D-glutamate--2,6-diaminopimelate ligase (486 aa).

A UDP-N-acetyl-alpha-D-muramoyl-L-alanyl-D-glutamate-binding site is contributed by Ser31. 109 to 115 (GTNGKTT) serves as a coordination point for ATP. UDP-N-acetyl-alpha-D-muramoyl-L-alanyl-D-glutamate is bound by residues Asn150, 151-152 (TT), Ser178, and Arg186. Lys218 carries the post-translational modification N6-carboxylysine. Meso-2,6-diaminopimelate-binding positions include Arg381, 405–408 (DNPR), Gly455, and Glu459. Positions 405–408 (DNPR) match the Meso-diaminopimelate recognition motif motif.

The protein belongs to the MurCDEF family. MurE subfamily. The cofactor is Mg(2+). In terms of processing, carboxylation is probably crucial for Mg(2+) binding and, consequently, for the gamma-phosphate positioning of ATP.

It localises to the cytoplasm. It catalyses the reaction UDP-N-acetyl-alpha-D-muramoyl-L-alanyl-D-glutamate + meso-2,6-diaminopimelate + ATP = UDP-N-acetyl-alpha-D-muramoyl-L-alanyl-gamma-D-glutamyl-meso-2,6-diaminopimelate + ADP + phosphate + H(+). The protein operates within cell wall biogenesis; peptidoglycan biosynthesis. Functionally, catalyzes the addition of meso-diaminopimelic acid to the nucleotide precursor UDP-N-acetylmuramoyl-L-alanyl-D-glutamate (UMAG) in the biosynthesis of bacterial cell-wall peptidoglycan. The polypeptide is UDP-N-acetylmuramoyl-L-alanyl-D-glutamate--2,6-diaminopimelate ligase (Halalkalibacterium halodurans (strain ATCC BAA-125 / DSM 18197 / FERM 7344 / JCM 9153 / C-125) (Bacillus halodurans)).